The chain runs to 187 residues: UPF0340 protein SPJ_0612 (187 aa).

Belongs to the UPF0340 family.

The sequence is that of UPF0340 protein SPJ_0612 from Streptococcus pneumoniae (strain JJA).